We begin with the raw amino-acid sequence, 169 residues long: S-ribosylhomocysteine lyase (169 aa).

H54, H58, and C128 together coordinate Fe cation.

Belongs to the LuxS family. In terms of assembly, homodimer. Fe cation serves as cofactor.

It catalyses the reaction S-(5-deoxy-D-ribos-5-yl)-L-homocysteine = (S)-4,5-dihydroxypentane-2,3-dione + L-homocysteine. Involved in the synthesis of autoinducer 2 (AI-2) which is secreted by bacteria and is used to communicate both the cell density and the metabolic potential of the environment. The regulation of gene expression in response to changes in cell density is called quorum sensing. Catalyzes the transformation of S-ribosylhomocysteine (RHC) to homocysteine (HC) and 4,5-dihydroxy-2,3-pentadione (DPD). This Shewanella sp. (strain ANA-3) protein is S-ribosylhomocysteine lyase.